The primary structure comprises 318 residues: Thymidylate synthase (318 aa).

DUMP-binding positions include R25 and 180–181; that span reads RR. The Nucleophile role is filled by C200. Residues 220–223, N231, and 261–263 each bind dUMP; these read RSGD and HIY. Position 223 (D223) interacts with (6R)-5,10-methylene-5,6,7,8-tetrahydrofolate. (6R)-5,10-methylene-5,6,7,8-tetrahydrofolate is bound at residue A317.

This sequence belongs to the thymidylate synthase family. Bacterial-type ThyA subfamily. In terms of assembly, homodimer.

It localises to the cytoplasm. It catalyses the reaction dUMP + (6R)-5,10-methylene-5,6,7,8-tetrahydrofolate = 7,8-dihydrofolate + dTMP. It functions in the pathway pyrimidine metabolism; dTTP biosynthesis. Catalyzes the reductive methylation of 2'-deoxyuridine-5'-monophosphate (dUMP) to 2'-deoxythymidine-5'-monophosphate (dTMP) while utilizing 5,10-methylenetetrahydrofolate (mTHF) as the methyl donor and reductant in the reaction, yielding dihydrofolate (DHF) as a by-product. This enzymatic reaction provides an intracellular de novo source of dTMP, an essential precursor for DNA biosynthesis. In Lactobacillus helveticus (strain DPC 4571), this protein is Thymidylate synthase.